The primary structure comprises 429 residues: D-inositol 3-phosphate glycosyltransferase (429 aa).

His-20 provides a ligand contact to 1D-myo-inositol 3-phosphate. UDP-N-acetyl-alpha-D-glucosamine contacts are provided by residues 26–27 and Gly-34; that span reads QP. Residues 31 to 36, Lys-89, Tyr-122, Thr-146, and Arg-166 contribute to the 1D-myo-inositol 3-phosphate site; that span reads DAGGMN. UDP-N-acetyl-alpha-D-glucosamine contacts are provided by Arg-240, Lys-245, and Gln-306. The Mg(2+) site is built by Tyr-315, Arg-316, and Ala-318. UDP-N-acetyl-alpha-D-glucosamine contacts are provided by Glu-328 and Glu-336. A Mg(2+)-binding site is contributed by Thr-342.

Belongs to the glycosyltransferase group 1 family. MshA subfamily. As to quaternary structure, homodimer.

The catalysed reaction is 1D-myo-inositol 3-phosphate + UDP-N-acetyl-alpha-D-glucosamine = 1D-myo-inositol 2-acetamido-2-deoxy-alpha-D-glucopyranoside 3-phosphate + UDP + H(+). Functionally, catalyzes the transfer of a N-acetyl-glucosamine moiety to 1D-myo-inositol 3-phosphate to produce 1D-myo-inositol 2-acetamido-2-deoxy-glucopyranoside 3-phosphate in the mycothiol biosynthesis pathway. The sequence is that of D-inositol 3-phosphate glycosyltransferase from Nocardiopsis dassonvillei (strain ATCC 23218 / DSM 43111 / CIP 107115 / JCM 7437 / KCTC 9190 / NBRC 14626 / NCTC 10488 / NRRL B-5397 / IMRU 509) (Actinomadura dassonvillei).